The primary structure comprises 88 residues: Apolipoprotein C-I (88 aa).

Residues 1 to 26 form the signal peptide; the sequence is MRLFISLPVLIVVLAMALEGPAPAQA.

Belongs to the apolipoprotein C1 family.

The protein localises to the secreted. Its function is as follows. Inhibitor of lipoprotein binding to the low density lipoprotein (LDL) receptor, LDL receptor-related protein, and very low density lipoprotein (VLDL) receptor. Associates with high density lipoproteins (HDL) and the triacylglycerol-rich lipoproteins in the plasma and makes up about 10% of the protein of the VLDL and 2% of that of HDL. Appears to interfere directly with fatty acid uptake and is also the major plasma inhibitor of cholesteryl ester transfer protein (CETP). Modulates the interaction of APOE with beta-migrating VLDL and inhibits binding of beta-VLDL to the LDL receptor-related protein. Binds free fatty acids and reduces their intracellular esterification. This is Apolipoprotein C-I (APOC1) from Myodes glareolus (Bank vole).